The chain runs to 156 residues: ATP synthase subunit b (156 aa).

The chain crosses the membrane as a helical span at residues 12–32 (VAFFIFVLFCMKFVWPPVIAA).

It belongs to the ATPase B chain family. As to quaternary structure, F-type ATPases have 2 components, F(1) - the catalytic core - and F(0) - the membrane proton channel. F(1) has five subunits: alpha(3), beta(3), gamma(1), delta(1), epsilon(1). F(0) has three main subunits: a(1), b(2) and c(10-14). The alpha and beta chains form an alternating ring which encloses part of the gamma chain. F(1) is attached to F(0) by a central stalk formed by the gamma and epsilon chains, while a peripheral stalk is formed by the delta and b chains.

It is found in the cell inner membrane. In terms of biological role, f(1)F(0) ATP synthase produces ATP from ADP in the presence of a proton or sodium gradient. F-type ATPases consist of two structural domains, F(1) containing the extramembraneous catalytic core and F(0) containing the membrane proton channel, linked together by a central stalk and a peripheral stalk. During catalysis, ATP synthesis in the catalytic domain of F(1) is coupled via a rotary mechanism of the central stalk subunits to proton translocation. Component of the F(0) channel, it forms part of the peripheral stalk, linking F(1) to F(0). The chain is ATP synthase subunit b from Pseudomonas aeruginosa (strain UCBPP-PA14).